We begin with the raw amino-acid sequence, 397 residues long: Enoyl-[acyl-carrier-protein] reductase [NADH] (397 aa).

Residues 48–53 (GASTGY), 74–75 (FE), 111–112 (DA), and 139–140 (VA) each bind NAD(+). Tyrosine 225 is a binding site for substrate. Tyrosine 235 serves as the catalytic Proton donor. NAD(+) contacts are provided by residues lysine 244 and 273-275 (VVT).

It belongs to the TER reductase family. As to quaternary structure, monomer.

The catalysed reaction is a 2,3-saturated acyl-[ACP] + NAD(+) = a (2E)-enoyl-[ACP] + NADH + H(+). Its pathway is lipid metabolism; fatty acid biosynthesis. Functionally, involved in the final reduction of the elongation cycle of fatty acid synthesis (FAS II). Catalyzes the reduction of a carbon-carbon double bond in an enoyl moiety that is covalently linked to an acyl carrier protein (ACP). The protein is Enoyl-[acyl-carrier-protein] reductase [NADH] of Burkholderia pseudomallei (strain 1106a).